Reading from the N-terminus, the 576-residue chain is Arginine--tRNA ligase (576 aa).

A 'HIGH' region motif is present at residues 122–132; it reads PNVAKQMHVGH.

This sequence belongs to the class-I aminoacyl-tRNA synthetase family. Monomer.

It localises to the cytoplasm. The enzyme catalyses tRNA(Arg) + L-arginine + ATP = L-arginyl-tRNA(Arg) + AMP + diphosphate. In Yersinia pseudotuberculosis serotype O:3 (strain YPIII), this protein is Arginine--tRNA ligase.